We begin with the raw amino-acid sequence, 344 residues long: UDP-glycosyltransferase 73C4 (344 aa).

UDP-alpha-D-glucose is bound by residues Ser145, Trp202 to Ala203, His220 to Glu228, and Phe242 to Gln245.

Belongs to the UDP-glycosyltransferase family. As to expression, expressed in flowers and fruits.

The protein resides in the cytoplasm. It localises to the nucleus. Functionally, probable glucosyltransferase that cannot glycosylate abscisic acid (ABA) and auxin (IAA). This Solanum lycopersicum (Tomato) protein is UDP-glycosyltransferase 73C4.